We begin with the raw amino-acid sequence, 255 residues long: MPADIRIVPCLTDNFGYLVHDPATGATASIDAPEAAPLIAALDKEGWKLTDILVTHHHGDHVGGIAELKKKYQCRVHAPHDANAKIADADVRLQEGDVVRVGDLTARVLETPGHTLDHLSYVFDDDRALFAADTLFSIGCGRVFEGTYPMMWESLLKLRALPDDFKLYCGHEYTASNVKFALGIEPDNAALQARAKQVESLRAEGKPTIPVTLGEEKQANVFLRADVPSVAAAVGMPGAPAAEVFGEIRERKNNG.

Zn(2+) contacts are provided by His-56, His-58, Asp-60, His-61, His-114, Asp-133, and His-171.

This sequence belongs to the metallo-beta-lactamase superfamily. Glyoxalase II family. In terms of assembly, monomer. Zn(2+) serves as cofactor.

It catalyses the reaction an S-(2-hydroxyacyl)glutathione + H2O = a 2-hydroxy carboxylate + glutathione + H(+). Its pathway is secondary metabolite metabolism; methylglyoxal degradation; (R)-lactate from methylglyoxal: step 2/2. Functionally, thiolesterase that catalyzes the hydrolysis of S-D-lactoyl-glutathione to form glutathione and D-lactic acid. This Rhodopseudomonas palustris (strain ATCC BAA-98 / CGA009) protein is Hydroxyacylglutathione hydrolase.